Here is a 306-residue protein sequence, read N- to C-terminus: Secreted RxLR effector protein 76 (306 aa).

Positions 1 to 21 (MSGAFYVFTALLLVASDQIAA) are cleaved as a signal peptide. A RxLR-dEER motif is present at residues 48–65 (RFLRGSRDEPDNLANEER). Residues 105 to 142 (AAKAVKKRPRGAKAGRKMPRAAEAEAVKKVPRAGTAVK) form a disordered region. Residues 107–123 (KAVKKRPRGAKAGRKMP) show a composition bias toward basic residues.

The protein belongs to the RxLR effector family.

The protein resides in the secreted. It is found in the host nucleus. Functionally, secreted effector that partially suppresses the host cell death induced by cell death-inducing proteins. The protein is Secreted RxLR effector protein 76 of Plasmopara viticola (Downy mildew of grapevine).